The chain runs to 270 residues: F-actin-capping protein subunit beta (270 aa).

Belongs to the F-actin-capping protein beta subunit family. As to quaternary structure, component of the F-actin capping complex, composed of a heterodimer of an alpha and a beta subunit.

The protein localises to the cytoplasm. It localises to the cytoskeleton. Functionally, F-actin-capping proteins bind in a Ca(2+)-independent manner to the fast growing ends of actin filaments (barbed end) thereby blocking the exchange of subunits at these ends. Unlike other capping proteins (such as gelsolin and severin), these proteins do not sever actin filaments. This is F-actin-capping protein subunit beta (cap-2) from Caenorhabditis elegans.